The following is a 130-amino-acid chain: Putative pre-16S rRNA nuclease (130 aa).

Belongs to the YqgF nuclease family.

Its subcellular location is the cytoplasm. Functionally, could be a nuclease involved in processing of the 5'-end of pre-16S rRNA. In Sulfurimonas denitrificans (strain ATCC 33889 / DSM 1251) (Thiomicrospira denitrificans (strain ATCC 33889 / DSM 1251)), this protein is Putative pre-16S rRNA nuclease.